The chain runs to 1487 residues: Major viral transcription factor ICP4 homolog (1487 aa).

Disordered regions lie at residues 41 to 295 (AAPD…LPPG), 310 to 370 (LAKT…AEEA), and 803 to 1007 (PPTR…HTPR). The segment covering 66-75 (VIPPPSPAPE) has biased composition (pro residues). Low complexity-rich tracts occupy residues 165–193 (PSSA…SSSS) and 201–213 (DGAG…SSSS). A compositionally biased stretch (acidic residues) spans 214–224 (DDSDSDEGGEE). Positions 235 to 272 (AAKTPSAAGSPGPSSGGDRPAAGAATPKSCRSGAASPG) are enriched in low complexity. A compositionally biased stretch (pro residues) spans 273 to 285 (APAPAPASAPAPS). Low complexity-rich tracts occupy residues 807–829 (SQQP…AEGS), 849–860 (PSSHSQSPQHSQ), and 867–877 (ATTATCCRATQ). Polar residues predominate over residues 878–893 (TNARSRGQQHQPQKAR). Over residues 920 to 929 (HGRPRGKSGK) the composition is skewed to basic residues. A compositionally biased stretch (low complexity) spans 938–951 (AAQAGASASFSSSA). Residues 988–1007 (GPDRRGGFRRVPRGDCHTPR) are compositionally biased toward basic and acidic residues.

This sequence belongs to the herpesviridae ICP4 family. In terms of processing, a long stretch of serine residues may be a major site of phosphorylation.

It localises to the host nucleus. In terms of biological role, this IE protein is a multifunctional protein capable of migrating to the nucleus, binding to DNA, trans-activating other viral genes, and autoregulating its own synthesis. This chain is Major viral transcription factor ICP4 homolog (IE), found in Equus caballus (Horse).